The sequence spans 155 residues: Small ribosomal subunit protein uS7c (155 aa).

This sequence belongs to the universal ribosomal protein uS7 family. As to quaternary structure, part of the 30S ribosomal subunit.

It is found in the plastid. One of the primary rRNA binding proteins, it binds directly to 16S rRNA where it nucleates assembly of the head domain of the 30S subunit. In Lathraea clandestina (Purple toothwort), this protein is Small ribosomal subunit protein uS7c (rps7).